The primary structure comprises 187 residues: Elongation factor P (187 aa).

This sequence belongs to the elongation factor P family.

Its subcellular location is the cytoplasm. Its pathway is protein biosynthesis; polypeptide chain elongation. Involved in peptide bond synthesis. Stimulates efficient translation and peptide-bond synthesis on native or reconstituted 70S ribosomes in vitro. Probably functions indirectly by altering the affinity of the ribosome for aminoacyl-tRNA, thus increasing their reactivity as acceptors for peptidyl transferase. This is Elongation factor P (efp) from Synechocystis sp. (strain ATCC 27184 / PCC 6803 / Kazusa).